Consider the following 281-residue polypeptide: 2-dehydro-3-deoxyphosphooctonate aldolase (281 aa).

This sequence belongs to the KdsA family.

The protein resides in the cytoplasm. The catalysed reaction is D-arabinose 5-phosphate + phosphoenolpyruvate + H2O = 3-deoxy-alpha-D-manno-2-octulosonate-8-phosphate + phosphate. Its pathway is carbohydrate biosynthesis; 3-deoxy-D-manno-octulosonate biosynthesis; 3-deoxy-D-manno-octulosonate from D-ribulose 5-phosphate: step 2/3. It participates in bacterial outer membrane biogenesis; lipopolysaccharide biosynthesis. The sequence is that of 2-dehydro-3-deoxyphosphooctonate aldolase from Pseudomonas fluorescens (strain SBW25).